Reading from the N-terminus, the 1287-residue chain is Cell adhesion molecule-related/down-regulated by oncogenes (1287 aa).

Residues 1–25 form the signal peptide; that stretch reads MHPDLGPLCTLLYVTLTILCSSVSS. The Extracellular segment spans residues 26–963; that stretch reads DLAPYFTSEP…PATSPARSSD (938 aa). Ig-like C2-type domains are found at residues 29–114, 120–204, 225–303, 310–396, and 405–516; these read PYFT…ATVS, DFGS…LKVE, PTHS…KYVT, EHAS…GRLE, and PVII…ASLM. C50 and C97 form a disulfide bridge. Residues N88, N100, N180, N287, N294, N342, and N427 are each glycosylated (N-linked (GlcNAc...) asparagine). 2 disulfide bridges follow: C141/C191 and C243/C290. Disulfide bonds link C333/C380 and C426/C500. Residues 531–553 are disordered; that stretch reads LPDAAQNDDRSKRDGSETGLLSS. Basic and acidic residues predominate over residues 537-546; the sequence is NDDRSKRDGS. N-linked (GlcNAc...) asparagine glycosylation occurs at N570. Fibronectin type-III domains follow at residues 579–677, 723–821, and 826–926; these read APII…SKEK, APDR…FPNR, and PITG…TKVK. N-linked (GlcNAc...) asparagine glycosylation occurs at N873. A disordered region spans residues 933–955; the sequence is EYPVKDLSTPPNSLGSGGNVGPA. The helical transmembrane segment at 964–984 threads the bilayer; the sequence is MLYLIVGCVLGVMVLILMVFI. Topologically, residues 985-1287 are cytoplasmic; sequence AMCLWKNRQQ…TEVLQQPRET (303 aa). The disordered stretch occupies residues 1268–1287; that stretch reads SPPGIPLDSPTEVLQQPRET.

In terms of assembly, part of a complex that contains BOC, CDON, NEO1, cadherins and CTNNB1. Interacts with NTN3. Interacts with PTCH1. Interacts with GAS1. Interacts with DHH, IHH and SHH. N-glycosylated.

Its subcellular location is the cell membrane. Its function is as follows. Component of a cell-surface receptor complex that mediates cell-cell interactions between muscle precursor cells. Promotes differentiation of myogenic cells. The sequence is that of Cell adhesion molecule-related/down-regulated by oncogenes (CDON) from Homo sapiens (Human).